The chain runs to 460 residues: Keratin, type I cytoskeletal 27 (460 aa).

Residues 1–83 form a head region; the sequence is MSVRFSSASR…GNEHGLLSGN (83 aa). Residues 84-119 form a coil 1A region; it reads EKVTMQNLNDRLASYLDNVRALEEANADLEQKIKGW. The region spanning 84–399 is the IF rod domain; the sequence is EKVTMQNLND…RLIDGEDGSC (316 aa). Positions 120–141 are linker 1; the sequence is YEKFGPGSCRGLDHDYSRYFTV. A coil 1B region spans residues 142–233; sequence IDDLRNQIIS…KNHEEEMKAL (92 aa). Positions 234–256 are linker 12; it reads QCAAGGNVNVEMNAAPGVDLTVL. The coil 2 stretch occupies residues 257 to 395; sequence LNNMRAEYEA…ETYCRLIDGE (139 aa). The segment at 396 to 460 is tail; it reads DGSCTKSKGY…NMKSEQRVPS (65 aa). A disordered region spans residues 429–460; it reads DPRGKVPSSRVHTVEEKSTKVNNMKSEQRVPS. Residues 448–460 show a composition bias toward polar residues; that stretch reads KVNNMKSEQRVPS.

It belongs to the intermediate filament family. As to quaternary structure, heterotetramer of two type I and two type II keratins. Interacts with KRT6A to form filaments.

The protein localises to the cytoplasm. In terms of biological role, essential for the proper assembly of type I and type II keratin protein complexes and formation of keratin intermediate filaments in the inner root sheath (irs). This Capra hircus (Goat) protein is Keratin, type I cytoskeletal 27.